The sequence spans 176 residues: B9 domain-containing protein 2 (176 aa).

One can recognise a C2 B9-type domain in the interval 2–118 (AEVHIIGQII…LSPTWRPLGT (117 aa)).

Belongs to the B9D family. As to quaternary structure, part of the tectonic-like complex (also named B9 complex).

Its subcellular location is the cytoplasm. The protein resides in the cytoskeleton. It is found in the cilium basal body. The protein localises to the cilium axoneme. Functionally, component of the tectonic-like complex, a complex localized at the transition zone of primary cilia and acting as a barrier that prevents diffusion of transmembrane proteins between the cilia and plasma membranes. The chain is B9 domain-containing protein 2 (b9d2) from Xenopus laevis (African clawed frog).